Consider the following 599-residue polypeptide: Sulfite reductase [NADPH] flavoprotein alpha-component (599 aa).

The Flavodoxin-like domain maps to 64–202 (ITIISASQTG…AASEWRARVV (139 aa)). Residues 70-75 (SQTGNA), 117-120 (STQG), and 153-162 (LGDSSYEFFC) each bind FMN. The region spanning 234 to 448 (DAPLVASLSV…IEHNDNFRLP (215 aa)) is the FAD-binding FR-type domain. FAD is bound by residues threonine 322, alanine 356, 386–389 (RLYS), 404–406 (TVG), tyrosine 410, and 419–422 (GGAS). Residues 519 to 520 (SR), 525 to 529 (KVYVQ), and aspartate 561 contribute to the NADP(+) site. An FAD-binding site is contributed by tyrosine 599.

The protein belongs to the NADPH-dependent sulphite reductase flavoprotein subunit CysJ family. This sequence in the N-terminal section; belongs to the flavodoxin family. In the C-terminal section; belongs to the flavoprotein pyridine nucleotide cytochrome reductase family. As to quaternary structure, alpha(8)-beta(8). The alpha component is a flavoprotein, the beta component is a hemoprotein. FAD serves as cofactor. FMN is required as a cofactor.

The enzyme catalyses hydrogen sulfide + 3 NADP(+) + 3 H2O = sulfite + 3 NADPH + 4 H(+). It participates in sulfur metabolism; hydrogen sulfide biosynthesis; hydrogen sulfide from sulfite (NADPH route): step 1/1. In terms of biological role, component of the sulfite reductase complex that catalyzes the 6-electron reduction of sulfite to sulfide. This is one of several activities required for the biosynthesis of L-cysteine from sulfate. The flavoprotein component catalyzes the electron flow from NADPH -&gt; FAD -&gt; FMN to the hemoprotein component. The polypeptide is Sulfite reductase [NADPH] flavoprotein alpha-component (Shigella boydii serotype 4 (strain Sb227)).